The sequence spans 200 residues: FMN-dependent NADH:quinone oxidoreductase (200 aa).

Residues Ser10, 96–99 (MYNF), and 140–143 (SRGG) each bind FMN.

This sequence belongs to the azoreductase type 1 family. As to quaternary structure, homodimer. It depends on FMN as a cofactor.

The enzyme catalyses 2 a quinone + NADH + H(+) = 2 a 1,4-benzosemiquinone + NAD(+). It catalyses the reaction N,N-dimethyl-1,4-phenylenediamine + anthranilate + 2 NAD(+) = 2-(4-dimethylaminophenyl)diazenylbenzoate + 2 NADH + 2 H(+). Functionally, quinone reductase that provides resistance to thiol-specific stress caused by electrophilic quinones. In terms of biological role, also exhibits azoreductase activity. Catalyzes the reductive cleavage of the azo bond in aromatic azo compounds to the corresponding amines. This is FMN-dependent NADH:quinone oxidoreductase from Photorhabdus laumondii subsp. laumondii (strain DSM 15139 / CIP 105565 / TT01) (Photorhabdus luminescens subsp. laumondii).